The chain runs to 103 residues: Large ribosomal subunit protein bL21 (103 aa).

This sequence belongs to the bacterial ribosomal protein bL21 family. In terms of assembly, part of the 50S ribosomal subunit. Contacts protein L20.

This protein binds to 23S rRNA in the presence of protein L20. In Erwinia tasmaniensis (strain DSM 17950 / CFBP 7177 / CIP 109463 / NCPPB 4357 / Et1/99), this protein is Large ribosomal subunit protein bL21.